The sequence spans 1692 residues: Fatty acid synthase alpha subunit hexA (1692 aa).

The segment at 44–80 (AVEEPVDETPAPETAPERPPLSRAKTAAVKPQETAAP) is disordered. One can recognise a Carrier domain in the interval 90-174 (LSAEEIVRAL…RVSSALLSKL (85 aa)). Serine 125 carries the O-(pantetheine 4'-phosphoryl)serine modification. The segment at 508–746 (FAGKNILITG…IAMLMTPELV (239 aa)) is ketoreductase (KR) domain. The region spanning 948–1430 (KEYLHEVAVE…QKGGQVVGVA (483 aa)) is the Ketosynthase family 3 (KS3) domain. The active-site For beta-ketoacyl synthase activity is cysteine 1135. The tract at residues 1263 to 1287 (GQAQLDKSSPSTNTTSRTSSVSLAR) is disordered. Residues 1270-1284 (SSPSTNTTSRTSSVS) are compositionally biased toward low complexity. Catalysis depends on for beta-ketoacyl synthase activity residues histidine 1315 and histidine 1356. Aspartate 1569 serves as a coordination point for Mg(2+). Acetyl-CoA is bound by residues 1569 to 1571 (DLV), 1615 to 1625 (EAVFKCLHTQT), 1639 to 1642 (KSDN), and 1668 to 1670 (ISH). Residue serine 1669 participates in Mg(2+) binding.

Belongs to the thiolase-like superfamily. Fungal fatty acid synthetase subunit alpha family. As to quaternary structure, [Alpha(6)beta(6)] hexamers of two multifunctional subunits (alpha and beta). 4'-phosphopantetheine is transferred from CoA to a specific serine of the acyl carrier domain by the C-terminal PPT domain. This modification is essential for activity because fatty acids are bound in thioester linkage to the sulfhydryl of the prosthetic group.

It carries out the reaction acetyl-CoA + n malonyl-CoA + 2n NADPH + 4n H(+) = a long-chain-acyl-CoA + n CoA + n CO2 + 2n NADP(+).. The enzyme catalyses a fatty acyl-[ACP] + malonyl-[ACP] + H(+) = a 3-oxoacyl-[ACP] + holo-[ACP] + CO2. It catalyses the reaction a (3R)-hydroxyacyl-[ACP] + NADP(+) = a 3-oxoacyl-[ACP] + NADPH + H(+). The protein operates within mycotoxin biosynthesis. Fatty acid synthase alpha subunit; part of the fragmented gene cluster that mediates the biosynthesis of dothistromin (DOTH), a polyketide toxin very similar in structure to the aflatoxin precursor, versicolorin B. The first step of the pathway is the conversion of acetate to norsolorinic acid (NOR) and requires the fatty acid synthase subunits hexA and hexB, as well as the polyketide synthase pksA. PksA combines a hexanoyl starter unit and 7 malonyl-CoA extender units to synthesize the precursor NOR. The hexanoyl starter unit is provided to the acyl-carrier protein (ACP) domain by the fungal fatty acid synthase hexA/hexB. The second step is the conversion of NOR to averantin (AVN) and requires the norsolorinic acid ketoreductase nor1, which catalyzes the dehydration of norsolorinic acid to form (1'S)-averantin. The cytochrome P450 monooxygenase avnA then catalyzes the hydroxylation of AVN to 5'hydroxyaverantin (HAVN). The next step is performed by adhA that transforms HAVN to averufin (AVF). Averufin might then be converted to hydroxyversicolorone by cypX and avfA. Hydroxyversicolorone is further converted versiconal hemiacetal acetate (VHA) by moxY. VHA is then the substrate for the versiconal hemiacetal acetate esterase est1 to yield versiconal (VAL). Versicolorin B synthase vbsA then converts VAL to versicolorin B (VERB) by closing the bisfuran ring. Then, the activity of the versicolorin B desaturase verB leads to versicolorin A (VERA). DotB, a predicted chloroperoxidase, may perform epoxidation of the A-ring of VERA. Alternatively, a cytochrome P450, such as cypX or avnA could catalyze this step. It is also possible that another, uncharacterized, cytochrome P450 enzyme is responsible for this step. Opening of the epoxide could potentially be achieved by the epoxide hydrolase epoA. However, epoA seems not to be required for DOTH biosynthesis, but other epoxide hydrolases may have the ability to complement this hydrolysis. Alternatively, opening of the epoxide ring could be achieved non-enzymatically. The next step is the deoxygenation of ring A to yield the 5,8-dihydroxyanthraquinone which is most likely catalyzed by the NADPH dehydrogenase encoded by ver1. The last stages of DOTH biosynthesis are proposed to involve hydroxylation of the bisfuran. OrdB and norB might have oxidative roles here. An alternative possibility is that cytochrome P450 monoogenases such as avnA and cypX might perform these steps in addition to previously proposed steps. This Dothistroma septosporum (strain NZE10 / CBS 128990) (Red band needle blight fungus) protein is Fatty acid synthase alpha subunit hexA.